The primary structure comprises 385 residues: UPF0284 protein P9215_05181 (385 aa).

This sequence belongs to the UPF0284 family.

In Prochlorococcus marinus (strain MIT 9215), this protein is UPF0284 protein P9215_05181.